Reading from the N-terminus, the 209-residue chain is Inorganic pyrophosphatase (209 aa).

Substrate-binding residues include Lys38, Arg52, and Tyr64. 3 residues coordinate Mg(2+): Asp92, Asp97, and Asp130. Tyr167 is a substrate binding site.

The protein belongs to the PPase family. In terms of assembly, homohexamer. It depends on Mg(2+) as a cofactor.

The protein resides in the cytoplasm. It carries out the reaction diphosphate + H2O = 2 phosphate + H(+). Catalyzes the hydrolysis of inorganic pyrophosphate (PPi) forming two phosphate ions. The chain is Inorganic pyrophosphatase from Chlamydia trachomatis serovar L2 (strain ATCC VR-902B / DSM 19102 / 434/Bu).